The following is a 494-amino-acid chain: One cut domain family member 3 (494 aa).

Disordered stretches follow at residues 130 to 162 (AAAV…RLAA), 199 to 239 (LSPL…GDKL), and 295 to 319 (AHGP…AAAE). 2 stretches are compositionally biased toward pro residues: residues 148-158 (AAAPPPPPPPQ) and 214-225 (PQPPPPPPPPPL). Positions 297–313 (GPHGGGGGPGGSGGGPS) are enriched in gly residues. Residues 312 to 398 (PSAGAAAEEI…QRMSALRLAA (87 aa)) constitute a DNA-binding region (CUT). Positions 414 to 473 (PKKQRLVFTDLQRRTLIAIFKENKRPSKEMQVTISQQLGLELNTVSNFFMNARRRCMNRW) form a DNA-binding region, homeobox. The interval 475–494 (EEPSTAPGGPAGATATFSKA) is disordered. The span at 476–494 (EPSTAPGGPAGATATFSKA) shows a compositional bias: low complexity.

Belongs to the CUT homeobox family.

Its subcellular location is the nucleus. Transcriptional activator. Binds the consensus DNA sequence 5'-DHWATTGAYTWWD-3' on a variety of gene promoters such as those of HNF3B and TTR. This is One cut domain family member 3 (ONECUT3) from Homo sapiens (Human).